Reading from the N-terminus, the 426-residue chain is MLKLNLEGIYNFLDWHNYAQTFAPQIKVIHQKLHQDQQLKEKYLGWLELPLHFDFQELEKMKQLKNSHPNLDVLVVIGIGGSYLGAKAGIEFLQTPFKKTKPEILFAGHQASGNYLTNLLHYLKDKNWAINVISKSGITLEPALAFRILKKEIEEKYGKQLAKNRIFVTTDSQKGVLLNLALKEGYQTFVIPDSVGGRFSVFTSVGILPFVFANLDVVSMMKGALQAYHDTFQEDLFQNQAYQYALARYLLHTQQNKKMELLVSYEPHLLSFSEWWKQLFAESEGKEEKGLFVGATNNSTDLHSLGQFIQEGTKMLFETVLNVTSIKDDCVVPHIPNELDNLNYVAGKTYSQINQKILQATKQAHIEGKVPNLEIVIPTLDAYHFGYLAYFFQKACAMSGSLLGINPFNQPGVEIYKQKMFALLKS.

Glu282 serves as the catalytic Proton donor. Active-site residues include His303 and Lys417.

The protein belongs to the GPI family.

It is found in the cytoplasm. It catalyses the reaction alpha-D-glucose 6-phosphate = beta-D-fructose 6-phosphate. It participates in carbohydrate biosynthesis; gluconeogenesis. It functions in the pathway carbohydrate degradation; glycolysis; D-glyceraldehyde 3-phosphate and glycerone phosphate from D-glucose: step 2/4. Functionally, catalyzes the reversible isomerization of glucose-6-phosphate to fructose-6-phosphate. This Onion yellows phytoplasma (strain OY-M) protein is Glucose-6-phosphate isomerase.